The primary structure comprises 578 residues: Glutathione hydrolase 2 (578 aa).

Residues 1-26 (MNSFMSLVRTATIALLLIAFLQNANA) form the signal peptide. Asn-94 carries N-linked (GlcNAc...) asparagine glycosylation. Arg-103 is an L-glutamate binding site. N-linked (GlcNAc...) asparagine glycans are attached at residues Asn-176 and Asn-227. Residue Thr-374 is the Nucleophile of the active site. L-glutamate is bound by residues Thr-392, Asn-394, Glu-413, Asp-416, 446 to 447 (SS), and 467 to 468 (GG). Residue Asn-511 is glycosylated (N-linked (GlcNAc...) asparagine).

It belongs to the gamma-glutamyltransferase family. As to expression, expressed in roots, immature trichomes and pollen. In developing siliques, specifically expressed in the embryo, endosperm, outer integument and a small portion of the funiculus.

It is found in the secreted. It localises to the extracellular space. The protein localises to the apoplast. The catalysed reaction is an N-terminal (5-L-glutamyl)-[peptide] + an alpha-amino acid = 5-L-glutamyl amino acid + an N-terminal L-alpha-aminoacyl-[peptide]. It carries out the reaction glutathione + H2O = L-cysteinylglycine + L-glutamate. It catalyses the reaction an S-substituted glutathione + H2O = an S-substituted L-cysteinylglycine + L-glutamate. It functions in the pathway sulfur metabolism; glutathione metabolism. In terms of biological role, may be required for glutathione transport into developing seeds. This chain is Glutathione hydrolase 2 (GGT2), found in Arabidopsis thaliana (Mouse-ear cress).